A 671-amino-acid chain; its full sequence is Putative protein kinase C delta type homolog (671 aa).

A disordered region spans residues M1 to H136. Residues S14–S27 are compositionally biased toward low complexity. Positions A57–R101 are enriched in basic and acidic residues. The segment covering S102–V116 has biased composition (gly residues). 2 consecutive Phorbol-ester/DAG-type zinc fingers follow at residues G144–C194 and P216–C266. The Protein kinase domain maps to F343 to F601. Residues L349 to V357 and K372 each bind ATP. D467 serves as the catalytic Proton acceptor. The region spanning R602–D671 is the AGC-kinase C-terminal domain.

This sequence belongs to the protein kinase superfamily. AGC Ser/Thr protein kinase family. PKC subfamily.

The enzyme catalyses L-seryl-[protein] + ATP = O-phospho-L-seryl-[protein] + ADP + H(+). The catalysed reaction is L-threonyl-[protein] + ATP = O-phospho-L-threonyl-[protein] + ADP + H(+). The polypeptide is Putative protein kinase C delta type homolog (Drosophila melanogaster (Fruit fly)).